The primary structure comprises 78 residues: DNA-directed RNA polymerase subunit omega (78 aa).

Belongs to the RNA polymerase subunit omega family. The RNAP catalytic core consists of 2 alpha, 1 beta, 1 beta' and 1 omega subunit. When a sigma factor is associated with the core the holoenzyme is formed, which can initiate transcription.

It carries out the reaction RNA(n) + a ribonucleoside 5'-triphosphate = RNA(n+1) + diphosphate. Functionally, promotes RNA polymerase assembly. Latches the N- and C-terminal regions of the beta' subunit thereby facilitating its interaction with the beta and alpha subunits. The protein is DNA-directed RNA polymerase subunit omega of Desulfovibrio desulfuricans (strain ATCC 27774 / DSM 6949 / MB).